A 490-amino-acid polypeptide reads, in one-letter code: UDP-glycosyltransferase 86A1 (490 aa).

Residues S294, 352–354 (CCQ), 369–377 (HCGWNSILE), and 391–394 (LTDQ) each bind UDP-alpha-D-glucose.

The protein belongs to the UDP-glycosyltransferase family.

In Arabidopsis thaliana (Mouse-ear cress), this protein is UDP-glycosyltransferase 86A1 (UGT86A1).